Consider the following 437-residue polypeptide: Sorting nexin-30 (437 aa).

Residues 1–45 (MAGGPPKALPSTGPQSLRDMPHPLAGSSSEEAVGGDSTPSPDLLM) are disordered. Residue threonine 38 is modified to Phosphothreonine. Position 40 is a phosphoserine (serine 40). The region spanning 89–210 (RDLFVTVDDP…VFLTAKDLNA (122 aa)) is the PX domain. A 1,2-diacyl-sn-glycero-3-phospho-(1D-myo-inositol-3-phosphate) is bound by residues arginine 132, glutamine 134, lysine 162, and arginine 176. Positions 234 to 437 (KLRSRPLEFA…PLLQEKQETK (204 aa)) constitute a BAR domain.

Belongs to the sorting nexin family. In terms of assembly, heterodimer; heterodimerizes with SNX4.

The protein localises to the early endosome membrane. Involved in the regulation of endocytosis and in several stages of intracellular trafficking. Together with SNX4, involved in autophagosome assembly. The polypeptide is Sorting nexin-30 (Mus musculus (Mouse)).